The primary structure comprises 547 residues: Chaperonin GroEL (547 aa).

Residues T30 to P33, K51, D87 to T91, G415, and D496 contribute to the ATP site.

This sequence belongs to the chaperonin (HSP60) family. Forms a cylinder of 14 subunits composed of two heptameric rings stacked back-to-back. Interacts with the co-chaperonin GroES.

The protein resides in the cytoplasm. It catalyses the reaction ATP + H2O + a folded polypeptide = ADP + phosphate + an unfolded polypeptide.. Together with its co-chaperonin GroES, plays an essential role in assisting protein folding. The GroEL-GroES system forms a nano-cage that allows encapsulation of the non-native substrate proteins and provides a physical environment optimized to promote and accelerate protein folding. In Actinobacillus pleuropneumoniae serotype 5b (strain L20), this protein is Chaperonin GroEL.